We begin with the raw amino-acid sequence, 842 residues long: Leucine--tRNA ligase (842 aa).

The short motif at 62–72 (PYPSGDLHMGH) is the 'HIGH' region element. The disordered stretch occupies residues 390 to 414 (GDEDPAETGVATAGEGTLKNSGELD). A 'KMSKS' region motif is present at residues 607–611 (AMSKS). Lys610 serves as a coordination point for ATP.

Belongs to the class-I aminoacyl-tRNA synthetase family.

It is found in the cytoplasm. It catalyses the reaction tRNA(Leu) + L-leucine + ATP = L-leucyl-tRNA(Leu) + AMP + diphosphate. The polypeptide is Leucine--tRNA ligase (Paenarthrobacter aurescens (strain TC1)).